The following is a 273-amino-acid chain: Dermonecrotic toxin LhSicTox-alphaIA2aii (273 aa).

H5 is a catalytic residue. Mg(2+) is bound by residues E25 and D27. Catalysis depends on H41, which acts as the Nucleophile. 2 cysteine pairs are disulfide-bonded: C45–C51 and C47–C190. D85 serves as a coordination point for Mg(2+).

This sequence belongs to the arthropod phospholipase D family. Class II subfamily. It depends on Mg(2+) as a cofactor. In terms of tissue distribution, expressed by the venom gland.

It localises to the secreted. It catalyses the reaction an N-(acyl)-sphingosylphosphocholine = an N-(acyl)-sphingosyl-1,3-cyclic phosphate + choline. The enzyme catalyses an N-(acyl)-sphingosylphosphoethanolamine = an N-(acyl)-sphingosyl-1,3-cyclic phosphate + ethanolamine. The catalysed reaction is a 1-acyl-sn-glycero-3-phosphocholine = a 1-acyl-sn-glycero-2,3-cyclic phosphate + choline. It carries out the reaction a 1-acyl-sn-glycero-3-phosphoethanolamine = a 1-acyl-sn-glycero-2,3-cyclic phosphate + ethanolamine. In terms of biological role, dermonecrotic toxins cleave the phosphodiester linkage between the phosphate and headgroup of certain phospholipids (sphingolipid and lysolipid substrates), forming an alcohol (often choline) and a cyclic phosphate. This toxin acts on sphingomyelin (SM). It may also act on ceramide phosphoethanolamine (CPE), lysophosphatidylcholine (LPC) and lysophosphatidylethanolamine (LPE), but not on lysophosphatidylserine (LPS), and lysophosphatidylglycerol (LPG). It acts by transphosphatidylation, releasing exclusively cyclic phosphate products as second products. Induces dermonecrosis, hemolysis, increased vascular permeability, edema, inflammatory response, and platelet aggregation. The protein is Dermonecrotic toxin LhSicTox-alphaIA2aii of Loxosceles hirsuta (Recluse spider).